The following is a 327-amino-acid chain: Gamma-resorcylate decarboxylase (327 aa).

Zn(2+) contacts are provided by E8, H10, H164, and D287. The active site involves D287.

It belongs to the metallo-dependent hydrolases superfamily. ACMSD family. Homotetramer. It depends on Zn(2+) as a cofactor.

The enzyme catalyses 2,6-dihydroxybenzoate + H(+) = resorcinol + CO2. It catalyses the reaction 2,3-dihydroxybenzoate + H(+) = catechol + CO2. The protein operates within aromatic compound metabolism. With respect to regulation, insensitive to oxygen. Decarboxylation and carboxylation are inhibited by AgNO(3) and by diethyl pyrocarbonate, a histidine residue-specific inhibitor. Decarboxylation is also inhibited by HgCl(2) and activated by MgCl(2). In terms of biological role, involved in the gamma-resorcylate (2,6-dihydroxybenzoate) catabolism. Catalyzes the reversible decarboxylation of gamma-resorcylate to resorcinol. Also catalyzes the decarboxylation of 2,3-dihydroxybenzoate to catechol, but does not act on 2-hydroxybenzoic acid 3-hydroxybenzoic acid, 4-hydroxybenzoic acid, 3,4-dihydroxybenzoic acid, 2,5-dihydroxybenzoic acid, 2,3,4-trihydroxybenzoic acid, 3,4,5-trihydroxybenzoic acid, 4-aminobenzoic acid, o-hydroxyphenylacetic acid and vanillic acid. Resorcinol and catechol can both be carboxylated by the reverse reaction. The protein is Gamma-resorcylate decarboxylase of Rhizobium radiobacter (Agrobacterium tumefaciens).